The following is a 279-amino-acid chain: 4-hydroxy-3-methylbut-2-enyl diphosphate reductase (279 aa).

A [4Fe-4S] cluster-binding site is contributed by cysteine 12. (2E)-4-hydroxy-3-methylbut-2-enyl diphosphate is bound by residues histidine 42 and histidine 74. Residues histidine 42 and histidine 74 each contribute to the dimethylallyl diphosphate site. The isopentenyl diphosphate site is built by histidine 42 and histidine 74. Cysteine 96 is a binding site for [4Fe-4S] cluster. Histidine 124 is a (2E)-4-hydroxy-3-methylbut-2-enyl diphosphate binding site. Position 124 (histidine 124) interacts with dimethylallyl diphosphate. Residue histidine 124 participates in isopentenyl diphosphate binding. Catalysis depends on glutamate 126, which acts as the Proton donor. Threonine 162 lines the (2E)-4-hydroxy-3-methylbut-2-enyl diphosphate pocket. Cysteine 190 serves as a coordination point for [4Fe-4S] cluster. Residues serine 218, serine 219, asparagine 220, and serine 263 each coordinate (2E)-4-hydroxy-3-methylbut-2-enyl diphosphate. 4 residues coordinate dimethylallyl diphosphate: serine 218, serine 219, asparagine 220, and serine 263. Serine 218, serine 219, asparagine 220, and serine 263 together coordinate isopentenyl diphosphate.

This sequence belongs to the IspH family. Requires [4Fe-4S] cluster as cofactor.

The enzyme catalyses isopentenyl diphosphate + 2 oxidized [2Fe-2S]-[ferredoxin] + H2O = (2E)-4-hydroxy-3-methylbut-2-enyl diphosphate + 2 reduced [2Fe-2S]-[ferredoxin] + 2 H(+). It catalyses the reaction dimethylallyl diphosphate + 2 oxidized [2Fe-2S]-[ferredoxin] + H2O = (2E)-4-hydroxy-3-methylbut-2-enyl diphosphate + 2 reduced [2Fe-2S]-[ferredoxin] + 2 H(+). It participates in isoprenoid biosynthesis; dimethylallyl diphosphate biosynthesis; dimethylallyl diphosphate from (2E)-4-hydroxy-3-methylbutenyl diphosphate: step 1/1. It functions in the pathway isoprenoid biosynthesis; isopentenyl diphosphate biosynthesis via DXP pathway; isopentenyl diphosphate from 1-deoxy-D-xylulose 5-phosphate: step 6/6. Functionally, catalyzes the conversion of 1-hydroxy-2-methyl-2-(E)-butenyl 4-diphosphate (HMBPP) into a mixture of isopentenyl diphosphate (IPP) and dimethylallyl diphosphate (DMAPP). Acts in the terminal step of the DOXP/MEP pathway for isoprenoid precursor biosynthesis. This Alkaliphilus oremlandii (strain OhILAs) (Clostridium oremlandii (strain OhILAs)) protein is 4-hydroxy-3-methylbut-2-enyl diphosphate reductase.